A 264-amino-acid chain; its full sequence is MKQYIKLIKKIIRVGNQKKDRTGTGTLSIFGYNMKFDLKKGFPLLTTKKCHIASIIYELLWFLKGDTNISYLNENKISIWNNWANESGDVGPIYGKQWRNWSTPEGHEIDQIKNVLIQLKKNPDSRRMLVSSWNVGDIDKMRLPPCHVLFQFYVFNNTLSCQLYQRSCDVFLGLPFNIASYSILIHMIAQQCDLKVGDFLWTGGDVHLYNNHIELAKKQILRIPRTLPKLTILKKPQSLFQYCFEDFKIIGYHPYPAIKGEISI.

Position 21 (Arg-21) interacts with dUMP. Residue His-51 participates in (6R)-5,10-methylene-5,6,7,8-tetrahydrofolate binding. 126 to 127 (RR) lines the dUMP pocket. Cys-146 acts as the Nucleophile in catalysis. DUMP-binding positions include 166–169 (RSCD), Asn-177, and 207–209 (HLY). A (6R)-5,10-methylene-5,6,7,8-tetrahydrofolate-binding site is contributed by Asp-169. Ser-263 provides a ligand contact to (6R)-5,10-methylene-5,6,7,8-tetrahydrofolate.

Belongs to the thymidylate synthase family. Bacterial-type ThyA subfamily. Homodimer.

Its subcellular location is the cytoplasm. The enzyme catalyses dUMP + (6R)-5,10-methylene-5,6,7,8-tetrahydrofolate = 7,8-dihydrofolate + dTMP. It functions in the pathway pyrimidine metabolism; dTTP biosynthesis. Catalyzes the reductive methylation of 2'-deoxyuridine-5'-monophosphate (dUMP) to 2'-deoxythymidine-5'-monophosphate (dTMP) while utilizing 5,10-methylenetetrahydrofolate (mTHF) as the methyl donor and reductant in the reaction, yielding dihydrofolate (DHF) as a by-product. This enzymatic reaction provides an intracellular de novo source of dTMP, an essential precursor for DNA biosynthesis. This Buchnera aphidicola subsp. Acyrthosiphon pisum (strain APS) (Acyrthosiphon pisum symbiotic bacterium) protein is Thymidylate synthase.